The chain runs to 419 residues: Serine hydroxymethyltransferase (419 aa).

Residues leucine 121 and glycine 125–leucine 127 each bind (6S)-5,6,7,8-tetrahydrofolate. Lysine 230 is subject to N6-(pyridoxal phosphate)lysine. (6S)-5,6,7,8-tetrahydrofolate is bound by residues glutamate 246 and serine 355–phenylalanine 357.

This sequence belongs to the SHMT family. Homodimer. It depends on pyridoxal 5'-phosphate as a cofactor.

It localises to the cytoplasm. The catalysed reaction is (6R)-5,10-methylene-5,6,7,8-tetrahydrofolate + glycine + H2O = (6S)-5,6,7,8-tetrahydrofolate + L-serine. It participates in one-carbon metabolism; tetrahydrofolate interconversion. Its pathway is amino-acid biosynthesis; glycine biosynthesis; glycine from L-serine: step 1/1. Its function is as follows. Catalyzes the reversible interconversion of serine and glycine with tetrahydrofolate (THF) serving as the one-carbon carrier. This reaction serves as the major source of one-carbon groups required for the biosynthesis of purines, thymidylate, methionine, and other important biomolecules. Also exhibits THF-independent aldolase activity toward beta-hydroxyamino acids, producing glycine and aldehydes, via a retro-aldol mechanism. This is Serine hydroxymethyltransferase from Streptococcus suis (strain 98HAH33).